The following is a 373-amino-acid chain: MHNQAPIQRRKSKRIYVGNVPIGDGAPIAVQSMTNTRTTDVAATVNQIKALERVGADIVRVSVPTMDAAEAFKLIKQQVNVPLVADIHFDYRIALKVAEYGVDCLRINPGNIGNEERIRMVVDCARDKNIPIRIGVNAGSLEKDLQEKYGEPTPQALLESAMRHVDHLDRLNFDQFKVSVKASDVFLAVESYRLLAKQIDQPLHLGITEAGGARSGAVKSAIGLGLLLSEGIGDTLRVSLAADPVEEIKVGFDILKSLRIRSRGINFIACPTCSRQEFDVIGTVNALEQRLEDIITPMDVSIIGCVVNGPGEALVSTLGVTGGNKKSGLYEDGVRKDRLDNNDMIDQLEARIRAKASMLDEARRIDVQQVEAK.

Residues Cys-270, Cys-273, Cys-305, and Glu-312 each coordinate [4Fe-4S] cluster.

It belongs to the IspG family. [4Fe-4S] cluster is required as a cofactor.

It catalyses the reaction (2E)-4-hydroxy-3-methylbut-2-enyl diphosphate + oxidized [flavodoxin] + H2O + 2 H(+) = 2-C-methyl-D-erythritol 2,4-cyclic diphosphate + reduced [flavodoxin]. It participates in isoprenoid biosynthesis; isopentenyl diphosphate biosynthesis via DXP pathway; isopentenyl diphosphate from 1-deoxy-D-xylulose 5-phosphate: step 5/6. Functionally, converts 2C-methyl-D-erythritol 2,4-cyclodiphosphate (ME-2,4cPP) into 1-hydroxy-2-methyl-2-(E)-butenyl 4-diphosphate. This is 4-hydroxy-3-methylbut-2-en-1-yl diphosphate synthase (flavodoxin) from Klebsiella pneumoniae subsp. pneumoniae (strain ATCC 700721 / MGH 78578).